The following is a 532-amino-acid chain: MEQARALLQGKTVTIMGLGVHGGGCAAACFCAEAGARLTVTDLRNADALTPSLKRLRAYPSIRFTLGEHRLEDFENAHVVIKNPIVKGAHNIYLSAAQRAGARIETDISLFLRLSPAPLLAVSGSKGKSSTASALCYSLRALGFPAFLGGNSTVSPLEFVRHTTPATPVVLELSSWQLADLRAVDAQDHTVHHAGLLRPEIAIMTPIMADHQNWYADMESYVADKQVLYAHQGTHDTLLCNADDGWGPRFACEAQKNGVRVFWYTAQSPETACRACTPRLMERALWRATDGTYWARFAEGDRACMLIPPQLHVPGRVLQTQVASAALAALLFAQRHSLPPSSCPPCFCAHSHSPAYANHASPPDYACPSAHSPFQEHTRRLAQALESYTGIEHRLEFFYEKGGLRFYNDSASTVPEATIAALEAFDESVVLIVGGTDKNADYQPLAQAAAKAHALYLLAGSATARLQPLLHAAQVPFYGPFTSLEVLLQDLRARQKSPGVIVFSPGAASFELFAHEFERGTTFKSQVRIIFE.

ATP is bound at residue 124–130; sequence GSKGKSS.

Belongs to the MurCDEF family.

Its subcellular location is the cytoplasm. The catalysed reaction is UDP-N-acetyl-alpha-D-muramoyl-L-alanine + D-glutamate + ATP = UDP-N-acetyl-alpha-D-muramoyl-L-alanyl-D-glutamate + ADP + phosphate + H(+). It functions in the pathway cell wall biogenesis; peptidoglycan biosynthesis. Cell wall formation. Catalyzes the addition of glutamate to the nucleotide precursor UDP-N-acetylmuramoyl-L-alanine (UMA). The protein is UDP-N-acetylmuramoylalanine--D-glutamate ligase (murD) of Treponema pallidum (strain Nichols).